The following is a 472-amino-acid chain: 2-oxoglutarate carboxylase small subunit (472 aa).

A Biotin carboxylation domain is found at Met1–His445. ATP is bound by residues Lys115 and Glu199. Residues Lys119–Ala316 enclose the ATP-grasp domain. The active site involves Arg291.

Heterohexadecamer of 8 large subunits and 8 small subunits. Mg(2+) serves as cofactor. It depends on Mn(2+) as a cofactor. Co(2+) is required as a cofactor.

It carries out the reaction hydrogencarbonate + 2-oxoglutarate + ATP = (S)-oxalosuccinate + ADP + phosphate + H(+). The sequence is that of 2-oxoglutarate carboxylase small subunit from Hydrogenobacter thermophilus (strain DSM 6534 / IAM 12695 / TK-6).